The sequence spans 478 residues: Alpha-(1,3)-fucosyltransferase FucT (478 aa).

Residues glycine 94, 186–189, arginine 195, 222–225, asparagine 240, and 246–250 each bind substrate; these read VASN, VKNK, and YVTEK. The important for acceptor specificity stretch occupies residues 347–353; it reads DNPFIFC. Tandem repeats lie at residues 364–370, 371–377, 378–384, 385–391, 392–398, 399–405, 406–412, 413–419, 420–426, and 427–433. The 10 X 7 AA tandem repeat of D-D-L-R-[IV]-N-Y stretch occupies residues 364-433; it reads DDLRVNYDDL…VNYDDLRVNY (70 aa). The segment at 434–478 is may be involved in membrane binding; sequence ERLLSKATPLLELSQNTTSKIYRKAYQKSLPLLRAIRRWVKKLGL.

It belongs to the glycosyltransferase 10 family. In terms of assembly, homodimer.

It localises to the membrane. It is found in the cytoplasm. The enzyme catalyses a beta-D-galactosyl-(1-&gt;4)-N-acetyl-beta-D-glucosaminyl derivative + GDP-beta-L-fucose = a beta-D-galactosyl-(1-&gt;4)-[alpha-L-fucosyl-(1-&gt;3)]-N-acetyl-beta-D-glucosaminyl derivative + GDP + H(+). Its pathway is lipopolysaccharide biosynthesis; LPS oligosaccharide biosynthesis. In terms of biological role, involved in the biosynthesis of the Lewis X (LeX) trisaccharide of the lipopolysaccharide (LPS) O-antigen. Catalyzes the addition of fucose in alpha 1-3 linkage to Gal-beta-1-4-GlcNAc-beta-O-R (LacNAc-R) type II acceptor. This Helicobacter pylori (Campylobacter pylori) protein is Alpha-(1,3)-fucosyltransferase FucT.